The primary structure comprises 932 residues: Protocadherin gamma-A6 (932 aa).

A signal peptide spans 1–29 (MAPPQRHPQRSEQVLLLTLLGTLWGAAAA). 6 consecutive Cadherin domains span residues 30–133 (QIRY…TPRF), 134–242 (LKEE…TPMF), 243–347 (TQPV…VPEV), 348–452 (VVTS…PPTF), 453–562 (PHSS…APEI), and 570–682 (DGST…EPSA). Topologically, residues 30 to 692 (QIRYSIPEEL…KPNDSDLTLY (663 aa)) are extracellular. Asn-81 carries N-linked (GlcNAc...) asparagine glycosylation. 2 N-linked (GlcNAc...) asparagine glycosylation sites follow: Asn-419 and Asn-545. Residue Asn-685 is glycosylated (N-linked (GlcNAc...) asparagine). The helical transmembrane segment at 693–713 (LVVAVAAVSCVFLAFVIVLLA) threads the bilayer. The Cytoplasmic portion of the chain corresponds to 714-932 (LRLQRWHKSR…KKKSGKKEKK (219 aa)). Disordered regions lie at residues 804 to 841 (PRQLQQAPPNTDWRFSQAQRPGTSGSQNGDDTGTWPNN) and 902 to 932 (ATLTNAAGKRDGKAPAGGNGNKKKSGKKEKK). A compositionally biased stretch (polar residues) spans 806 to 841 (QLQQAPPNTDWRFSQAQRPGTSGSQNGDDTGTWPNN). A compositionally biased stretch (basic residues) spans 922–932 (NKKKSGKKEKK).

Its subcellular location is the cell membrane. Functionally, potential calcium-dependent cell-adhesion protein. May be involved in the establishment and maintenance of specific neuronal connections in the brain. This Homo sapiens (Human) protein is Protocadherin gamma-A6 (PCDHGA6).